The primary structure comprises 730 residues: Synaptotagmin-like protein 5 (730 aa).

A RabBD domain is found at 7–123; sequence FINLSFLLDH…IITGEWFFEE (117 aa). The segment at 64-106 adopts an FYVE-type zinc-finger fold; that stretch reads CVHCHRNLGLIFDRGDPCQACSLRVCRECRVAGPNGSWKCTVC. Residue serine 147 is modified to Phosphoserine. Disordered regions lie at residues 147-188, 217-271, and 294-355; these read SPGA…GFLL, QHFR…TRTV, and SQEL…LDKD. Polar residues-rich tracts occupy residues 248–271 and 305–322; these read PKSS…TRTV and TSGT…SSDQ. C2 domains follow at residues 406-527 and 563-694; these read VSGE…DEWF and PPEQ…VDWM.

In terms of assembly, binds RAB27A that has been activated by GTP-binding, and possibly also RAB3A and RAB6A. As to expression, highly expressed in placenta and liver.

Its subcellular location is the membrane. Its function is as follows. May act as Rab effector protein and play a role in vesicle trafficking. Binds phospholipids. The chain is Synaptotagmin-like protein 5 (SYTL5) from Homo sapiens (Human).